Reading from the N-terminus, the 340-residue chain is CRISPR-associated protein Cas7 (340 aa).

As to quaternary structure, component of the Cascade-like complex (Cascade I-B), composed of Cas5, Cas6, Cas7 and crRNA.

The protein resides in the cytoplasm. In terms of biological role, CRISPR (clustered regularly interspaced short palindromic repeat) is an adaptive immune system that provides protection against mobile genetic elements (viruses, transposable elements and conjugative plasmids). CRISPR clusters contain sequences complementary to antecedent mobile elements and target invading nucleic acids. CRISPR clusters are transcribed and processed into CRISPR RNA (crRNA). Plasmid targeted by CRISPR locus P1 transform wild-type cells very poorly. This protein helps process or stabilize pre-crRNA into individual crRNA units, in vivo Cas6 and Cas7 are also required for optimal crRNA processing and/or stability. This chain is CRISPR-associated protein Cas7, found in Haloferax volcanii (strain ATCC 29605 / DSM 3757 / JCM 8879 / NBRC 14742 / NCIMB 2012 / VKM B-1768 / DS2) (Halobacterium volcanii).